The chain runs to 1150 residues: Alpha-mannosidase 2 (1150 aa).

Over 1–5 the chain is Cytoplasmic; the sequence is MKLSR. A helical; Signal-anchor for type II membrane protein membrane pass occupies residues 6–26; it reads QFTVFGSAIFCVVIFSLYLML. Over 27-1150 the chain is Lumenal; that stretch reads DRGHLDYPRG…STFRIRLRWT (1124 aa). N-linked (GlcNAc...) asparagine glycosylation is present at Asn-78. Phosphoserine occurs at positions 80 and 82. Residue Asn-93 is glycosylated (N-linked (GlcNAc...) asparagine). Zn(2+)-binding residues include His-174, Asp-176, Asp-288, and His-568. Asp-288 serves as the catalytic Nucleophile. An N-linked (GlcNAc...) asparagine glycan is attached at Asn-1129.

Belongs to the glycosyl hydrolase 38 family. Homodimer; disulfide-linked. Zn(2+) serves as cofactor. Glycosylated. In terms of tissue distribution, all tissues, mostly in adrenal and thymus.

It localises to the golgi apparatus membrane. It catalyses the reaction N(4)-{beta-D-GlcNAc-(1-&gt;2)-alpha-D-Man-(1-&gt;3)-[alpha-D-Man-(1-&gt;3)-[alpha-D-Man-(1-&gt;6)]-alpha-D-Man-(1-&gt;6)]-beta-D-Man-(1-&gt;4)-beta-D-GlcNAc-(1-&gt;4)-beta-D-GlcNAc}-L-asparaginyl-[protein] + 2 H2O = 2 alpha-D-mannopyranose + an N(4)-{beta-D-GlcNAc-(1-&gt;2)-alpha-D-Man-(1-&gt;3)-[alpha-D-Man-(1-&gt;6)]-beta-D-Man-(1-&gt;4)-beta-D-GlcNAc-(1-&gt;4)-beta-D-GlcNAc}-L-asparaginyl-[protein]. Its pathway is protein modification; protein glycosylation. Functionally, catalyzes the first committed step in the biosynthesis of complex N-glycans. It controls conversion of high mannose to complex N-glycans; the final hydrolytic step in the N-glycan maturation pathway. The protein is Alpha-mannosidase 2 (Man2a1) of Mus musculus (Mouse).